The primary structure comprises 357 residues: MNPFNIISDTGVSAAVYAGLSRAKCTGQYKECRNGGSTFLRNVKFHITDPRNRNLTLNGRKSNIFQMVAETFWVMSGSGNIKEFLEFFLPRAPQYSDDGINWHGAYGPRMYAHNQLQSAIDLLIKDKDTRRAYVMIADPTLDSAPAIEAAYGVGHSPKDVPCNREIHINIIEDKLCMKVIQRSGDMLFGTGSINPFEFTFLQELLSEATGYALGDYQWDVTDAHYYKAFEDQVNDVLRSEQTFWPNDGKPLGTRFTSATKMQEFFAGVVRVWVKQINRLIDLGDAHYAINDLFADYGVLPEGRLRDYAKMVTFYIAAKQGEIEGDFKALLTNIPTNTDLGQAILTSPFRKFGVVLGD.

It belongs to the thymidylate synthase family.

It catalyses the reaction dUMP + (6R)-5,10-methylene-5,6,7,8-tetrahydrofolate + H2O = 5-hydroxymethyl-dUMP + (6S)-5,6,7,8-tetrahydrofolate. Its function is as follows. Catalyzes formation of 5-hydroxymethyldeoxyuridylate (5HMdUMP) as a step in the pathway that replaces dTMP by thymidine hypermodifications in the viral genome. As a final result of the pathway of hypermodification, 5-Nalpha-putrescinylthymidine (Nalpha-PutT) substitutes for about 50% of thymidines in the viral DNA. These modifications probably prevent degradation of viral genome by the host restriction-modification antiviral defense system. The chain is Deoxyuridylate hydroxymethyltransferase from Delftia acidovorans (Pseudomonas acidovorans).